Reading from the N-terminus, the 177-residue chain is Large ribosomal subunit protein uL6 (177 aa).

This sequence belongs to the universal ribosomal protein uL6 family. As to quaternary structure, part of the 50S ribosomal subunit.

In terms of biological role, this protein binds to the 23S rRNA, and is important in its secondary structure. It is located near the subunit interface in the base of the L7/L12 stalk, and near the tRNA binding site of the peptidyltransferase center. In Glaesserella parasuis serovar 5 (strain SH0165) (Haemophilus parasuis), this protein is Large ribosomal subunit protein uL6.